The chain runs to 247 residues: Triosephosphate isomerase (247 aa).

9 to 11 (NWK) is a substrate binding site. The Electrophile role is filled by histidine 94. Glutamate 165 functions as the Proton acceptor in the catalytic mechanism. Substrate is bound by residues glycine 171, serine 209, and 230–231 (GG).

Belongs to the triosephosphate isomerase family. In terms of assembly, homodimer.

The protein resides in the cytoplasm. The catalysed reaction is D-glyceraldehyde 3-phosphate = dihydroxyacetone phosphate. It participates in carbohydrate biosynthesis; gluconeogenesis. It functions in the pathway carbohydrate degradation; glycolysis; D-glyceraldehyde 3-phosphate from glycerone phosphate: step 1/1. Involved in the gluconeogenesis. Catalyzes stereospecifically the conversion of dihydroxyacetone phosphate (DHAP) to D-glyceraldehyde-3-phosphate (G3P). The chain is Triosephosphate isomerase from Albidiferax ferrireducens (strain ATCC BAA-621 / DSM 15236 / T118) (Rhodoferax ferrireducens).